The sequence spans 185 residues: Ribosome-recycling factor (185 aa).

This sequence belongs to the RRF family.

It localises to the cytoplasm. Functionally, responsible for the release of ribosomes from messenger RNA at the termination of protein biosynthesis. May increase the efficiency of translation by recycling ribosomes from one round of translation to another. The sequence is that of Ribosome-recycling factor from Shouchella clausii (strain KSM-K16) (Alkalihalobacillus clausii).